A 436-amino-acid chain; its full sequence is Homeobox protein PKNOX1 (436 aa).

The span at 1-20 (MMATQTLSIDSYQDGQQMQV) shows a compositional bias: polar residues. The interval 1–49 (MMATQTLSIDSYQDGQQMQVVTELKTEQDPNCSEPDAEGVSPPPVESQT) is disordered. 2 positions are modified to phosphoserine: S33 and S41. The 84-residue stretch at 80 to 163 (GSEGTTSASF…MNSETLLSGE (84 aa)) folds into the MEIS N-terminal domain. Positions 259–321 (SKNKRGVLPK…NARRRILQPM (63 aa)) form a DNA-binding region, homeobox; TALE-type. The segment at 401 to 436 (AGQSEDESVDSTEEDAGALAPAHISGLVLENSDSLQ) is disordered. Residues 404–416 (SEDESVDSTEEDA) are compositionally biased toward acidic residues.

Belongs to the TALE/MEIS homeobox family. Interacts with MN1. In terms of tissue distribution, ubiquitous. Isoform 2 is expressed in all examined tissues except in bone marrow.

It localises to the nucleus. Activates transcription in the presence of PBX1A and HOXA1. This chain is Homeobox protein PKNOX1, found in Homo sapiens (Human).